A 417-amino-acid chain; its full sequence is Secreted aspartic protease 4 (417 aa).

A signal peptide spans Met-1–Ala-18. Residues Ala-19–Arg-75 constitute a propeptide, activation peptide. The Peptidase A1 domain maps to Tyr-89–Ala-403. Asp-107 is an active-site residue. Asp-107–Gly-109 provides a ligand contact to pepstatin A. A disulfide bond links Cys-122 and Cys-134. Asn-137 carries N-linked (GlcNAc...) asparagine glycosylation. Residue Ala-160–Asp-161 coordinates pepstatin A. Residue Asp-267 participates in Zn(2+) binding. Asp-293 is a catalytic residue. Asp-293–Thr-297 is a binding site for pepstatin A. An intrachain disulfide couples Cys-331 to Cys-369.

This sequence belongs to the peptidase A1 family. Monomer.

The protein localises to the secreted. It carries out the reaction Preferential cleavage at the carboxyl of hydrophobic amino acids, but fails to cleave 15-Leu-|-Tyr-16, 16-Tyr-|-Leu-17 and 24-Phe-|-Phe-25 of insulin B chain. Activates trypsinogen, and degrades keratin.. Activity is inhibited by squash aspartic peptidase inhibitor (SQAPI). Its function is as follows. Secreted aspartic peptidases (SAPs) are a group of ten acidic hydrolases considered as key virulence factors. These enzymes supply the fungus with nutrient amino acids as well as are able to degrade the selected host's proteins involved in the immune defense. Moreover, acts toward human hemoglobin though limited proteolysis to generate a variety of antimicrobial hemocidins, enabling to compete with the other microorganisms of the same physiological niche using the microbicidal peptides generated from the host protein. Functionally, plays a key role in defense against host by cleaving histatin-5 (Hst 5), a peptide from human saliva that carries out fungicidal activity. The cleavage rate decreases in an order of SAP2 &gt; SAP9 &gt; SAP3 &gt; SAP7 &gt; SAP4 &gt; SAP1 &gt; SAP8. The first cleavage occurs between residues 'Lys-17' and 'His-18' of Hst 5, giving DSHAKRHHGYKRKFHEK and HHSHRGY peptides. Simultaneously, the DSHAKRHHGY and KRKFHEKHHSHRGY peptides are also formed. This is Secreted aspartic protease 4 from Candida albicans (strain SC5314 / ATCC MYA-2876) (Yeast).